A 252-amino-acid polypeptide reads, in one-letter code: Imidazole glycerol phosphate synthase subunit HisF (252 aa).

Residues Asp11 and Asp130 contribute to the active site.

It belongs to the HisA/HisF family. In terms of assembly, heterodimer of HisH and HisF.

The protein resides in the cytoplasm. It catalyses the reaction 5-[(5-phospho-1-deoxy-D-ribulos-1-ylimino)methylamino]-1-(5-phospho-beta-D-ribosyl)imidazole-4-carboxamide + L-glutamine = D-erythro-1-(imidazol-4-yl)glycerol 3-phosphate + 5-amino-1-(5-phospho-beta-D-ribosyl)imidazole-4-carboxamide + L-glutamate + H(+). The protein operates within amino-acid biosynthesis; L-histidine biosynthesis; L-histidine from 5-phospho-alpha-D-ribose 1-diphosphate: step 5/9. Functionally, IGPS catalyzes the conversion of PRFAR and glutamine to IGP, AICAR and glutamate. The HisF subunit catalyzes the cyclization activity that produces IGP and AICAR from PRFAR using the ammonia provided by the HisH subunit. This Streptococcus gordonii (strain Challis / ATCC 35105 / BCRC 15272 / CH1 / DL1 / V288) protein is Imidazole glycerol phosphate synthase subunit HisF.